The chain runs to 364 residues: Succinate--CoA ligase [ADP-forming] subunit beta (364 aa).

The region spanning 9 to 229 (KNIFKKYGIP…EFEEYKNKEK (221 aa)) is the ATP-grasp domain. ATP-binding positions include Lys43, 50 to 52 (GRG), Glu89, Leu92, and Glu97. Mg(2+) contacts are provided by Asn189 and Asp203. Substrate-binding positions include Asn246 and 303–305 (GIT).

It belongs to the succinate/malate CoA ligase beta subunit family. Heterotetramer of two alpha and two beta subunits. Mg(2+) is required as a cofactor.

The enzyme catalyses succinate + ATP + CoA = succinyl-CoA + ADP + phosphate. The catalysed reaction is GTP + succinate + CoA = succinyl-CoA + GDP + phosphate. Its pathway is carbohydrate metabolism; tricarboxylic acid cycle; succinate from succinyl-CoA (ligase route): step 1/1. Functionally, succinyl-CoA synthetase functions in the citric acid cycle (TCA), coupling the hydrolysis of succinyl-CoA to the synthesis of either ATP or GTP and thus represents the only step of substrate-level phosphorylation in the TCA. The beta subunit provides nucleotide specificity of the enzyme and binds the substrate succinate, while the binding sites for coenzyme A and phosphate are found in the alpha subunit. This is Succinate--CoA ligase [ADP-forming] subunit beta from Methanocaldococcus jannaschii (strain ATCC 43067 / DSM 2661 / JAL-1 / JCM 10045 / NBRC 100440) (Methanococcus jannaschii).